The chain runs to 318 residues: tRNA uridine(34) hydroxylase (318 aa).

Residues 123-217 (EDDDTVIIDA…YGKDPETKGQ (95 aa)) enclose the Rhodanese domain. The Cysteine persulfide intermediate role is filled by Cys177.

This sequence belongs to the TrhO family.

It catalyses the reaction uridine(34) in tRNA + AH2 + O2 = 5-hydroxyuridine(34) in tRNA + A + H2O. In terms of biological role, catalyzes oxygen-dependent 5-hydroxyuridine (ho5U) modification at position 34 in tRNAs. In Staphylococcus aureus (strain MRSA252), this protein is tRNA uridine(34) hydroxylase.